The sequence spans 468 residues: Fibrinogen beta chain (468 aa).

A Pyrrolidone carboxylic acid modification is found at Gln-1. Over residues 1-10 (QFPTDYDEGQ) the composition is skewed to acidic residues. Residues 1–54 (QFPTDYDEGQDDRPKVGLGARGHRPYDKKKEEAPSLRPVPPPISGGGYRARPAT) form a disordered region. Residue Thr-4 is glycosylated (O-linked (GalNAc...) threonine). Position 6 is a sulfotyrosine (Tyr-6). Residues 24 to 34 (RPYDKKKEEAP) show a composition bias toward basic and acidic residues. A coiled-coil region spans residues 88–204 (KLQDTLVRQE…TQMEYCRTPC (117 aa)). 2 disulfide bridges follow: Cys-208-Cys-293 and Cys-218-Cys-247. One can recognise a Fibrinogen C-terminal domain in the interval 209–465 (NIPVVSGKEC…KMSMKIRPYF (257 aa)). Asn-371 carries N-linked (GlcNAc...) asparagine glycosylation. A disulfide bridge connects residues Cys-401 and Cys-414.

Heterohexamer; disulfide linked. Contains 2 sets of 3 non-identical chains (alpha, beta and gamma). The 2 heterotrimers are in head to head conformation with the N-termini in a small central domain. Post-translationally, conversion of fibrinogen to fibrin is triggered by thrombin, which cleaves fibrinopeptides A and B from alpha and beta chains, and thus exposes the N-terminal polymerization sites responsible for the formation of the soft clot. The soft clot is converted into the hard clot by factor XIIIA which catalyzes the epsilon-(gamma-glutamyl)lysine cross-linking between gamma chains (stronger) and between alpha chains (weaker) of different monomers. In terms of tissue distribution, detected in blood plasma (at protein level).

Its subcellular location is the secreted. Functionally, cleaved by the protease thrombin to yield monomers which, together with fibrinogen alpha (FGA) and fibrinogen gamma (FGG), polymerize to form an insoluble fibrin matrix. Fibrin has a major function in hemostasis as one of the primary components of blood clots. In addition, functions during the early stages of wound repair to stabilize the lesion and guide cell migration during re-epithelialization. Was originally thought to be essential for platelet aggregation, based on in vitro studies using anticoagulated blood. However subsequent studies have shown that it is not absolutely required for thrombus formation in vivo. Enhances expression of SELP in activated platelets. Maternal fibrinogen is essential for successful pregnancy. Fibrin deposition is also associated with infection, where it protects against IFNG-mediated hemorrhage. May also facilitate the antibacterial immune response via both innate and T-cell mediated pathways. The sequence is that of Fibrinogen beta chain (FGB) from Bos taurus (Bovine).